The sequence spans 915 residues: Copper-exporting P-type ATPase (915 aa).

2 HMA domains span residues 11–72 and 73–134; these read NHFA…YQGG and TEQT…YQAI. Cysteine 22, cysteine 25, cysteine 84, and cysteine 87 together coordinate Cu(+). The disordered stretch occupies residues 142–169; the sequence is FAPAASIDEKETDTPDAENSSNTEATEA. Over residues 158-169 the composition is skewed to polar residues; sequence AENSSNTEATEA. Residues 172 to 236 enclose the HMA 3 domain; that stretch reads QTLSLLIKGM…AIQSSGYQAE (65 aa). Cu(+) is bound by residues cysteine 183 and cysteine 186. The next 7 helical transmembrane spans lie at 265 to 285, 293 to 313, 329 to 349, 359 to 379, 474 to 494, 514 to 534, and 541 to 561; these read LGIA…NMMI, VWGG…RHFF, TLVA…VAWP, VYFE…YIET, LVIT…IQMV, VFVP…YLYG, and YMLV…LGLA. Catalysis depends on aspartate 598, which acts as the 4-aspartylphosphate intermediate. Positions 796 and 800 each coordinate Mg(2+). The next 2 membrane-spanning stretches (helical) occupy residues 801–821 and 865–885; these read APAL…DVAI and IPIA…PVVA.

The protein belongs to the cation transport ATPase (P-type) (TC 3.A.3) family. Type IB subfamily.

The protein localises to the cell membrane. It carries out the reaction Cu(+)(in) + ATP + H2O = Cu(+)(out) + ADP + phosphate + H(+). In terms of biological role, involved in copper export. The protein is Copper-exporting P-type ATPase (copA) of Vibrio cholerae serotype O1 (strain ATCC 39315 / El Tor Inaba N16961).